The primary structure comprises 157 residues: Transcriptional repressor NrdR (157 aa).

Positions 1 to 21 (MRCPYCGSEDSQVKDSRPAED) are disordered. A zinc finger spans residues 3–34 (CPYCGSEDSQVKDSRPAEDGNAIRRRRICPDC). Positions 11–21 (SQVKDSRPAED) are enriched in basic and acidic residues. An ATP-cone domain is found at 49 to 139 (LMIIKKTGRK…VYRDFSHAED (91 aa)).

Belongs to the NrdR family. The cofactor is Zn(2+).

In terms of biological role, negatively regulates transcription of bacterial ribonucleotide reductase nrd genes and operons by binding to NrdR-boxes. The protein is Transcriptional repressor NrdR of Sinorhizobium medicae (strain WSM419) (Ensifer medicae).